Reading from the N-terminus, the 105-residue chain is Small ribosomal subunit protein uS10 (105 aa).

It belongs to the universal ribosomal protein uS10 family. Part of the 30S ribosomal subunit.

Functionally, involved in the binding of tRNA to the ribosomes. The protein is Small ribosomal subunit protein uS10 of Anaplasma phagocytophilum (strain HZ).